We begin with the raw amino-acid sequence, 612 residues long: UvrABC system protein C (612 aa).

A GIY-YIG domain is found at 21–99; that stretch reads HQPGVYRMYD…IKKYRPRYNV (79 aa). The UVR domain occupies 208-243; it reads QQVIDELMNKMEQASTDLDFERAARFRDQIAALRKT.

It belongs to the UvrC family. Interacts with UvrB in an incision complex.

Its subcellular location is the cytoplasm. Its function is as follows. The UvrABC repair system catalyzes the recognition and processing of DNA lesions. UvrC both incises the 5' and 3' sides of the lesion. The N-terminal half is responsible for the 3' incision and the C-terminal half is responsible for the 5' incision. In Idiomarina loihiensis (strain ATCC BAA-735 / DSM 15497 / L2-TR), this protein is UvrABC system protein C.